Consider the following 719-residue polypeptide: Fusicoccadiene synthase (719 aa).

A fusicocca-2,10(14)-diene synthase region spans residues 1–334 (MEFKYSEVVE…RYNPDVSFNK (334 aa)). Residues Asp92 and Asp96 each coordinate Mg(2+). A geranylgeranyl diphosphate synthase region spans residues 335–719 (TQLEWMRQGL…MRLLLELLRV (385 aa)). The interval 358–404 (EIDSDESAVSPTADESDSTEDSLGSGSRQDSSLSTGLSLSPVHSNEG) is disordered. The segment covering 378–400 (DSLGSGSRQDSSLSTGLSLSPVH) has biased composition (polar residues). Residues Lys435, Arg438, and His467 each contribute to the isopentenyl diphosphate site. Mg(2+) contacts are provided by Asp474 and Asp478. Arg483 contributes to the dimethylallyl diphosphate binding site. Residue Arg484 participates in isopentenyl diphosphate binding. The dimethylallyl diphosphate site is built by Lys561, Thr562, Gln602, Asn609, Lys619, and Lys629.

This sequence in the N-terminal section; belongs to the terpene synthase family. The protein in the C-terminal section; belongs to the FPP/GGPP synthase family. Hexamer.

It carries out the reaction geranylgeranyl diphosphate = fusicocca-2,10(14)-diene + diphosphate. The enzyme catalyses isopentenyl diphosphate + (2E,6E)-farnesyl diphosphate = (2E,6E,10E)-geranylgeranyl diphosphate + diphosphate. Its pathway is mycotoxin biosynthesis. In terms of biological role, multifunctional diterpene synthase; part of the 2 gene clusters that mediate the biosynthesis of fusicoccins, diterpene glucosides that display phytohormone-like activity and function as potent activators of plasma membrane H(+)-ATPases in plants by modifying 14-3-3 proteins and cause the plant disease constriction canker. The first step in the pathway is performed by the fusicoccadiene synthase PaFS that possesses both prenyl transferase and terpene cyclase activity, converting isopentenyl diphosphate and dimethylallyl diphosphate into geranylgeranyl diphosphate (GGDP) and successively converting GGDP into fusicocca-2,10(14)-diene, a precursor for fusicoccin H. Fusicoccadiene synthase is an allosteric enzyme for GGPP cyclization that generates 64% fusicoccadiene, 9% delta-araneosene, and one additional unidentified diterpene product, when incubated with GGPP. In the absence of isopentenyl diphosphate (IPP), PaFS can also solvolyze the shorter chain geranyl diphosphate (GPP) and farnesyl diphosphate (FPP) as alternative substrates to yield predominantly acyclic products. FPP is converted to farnesol (60.5%), nerolidol (14.0%), and farnesene (14.0%), while GPP is converted to a mixture of geraniol (59.5%) and linalool (35.0%). The second step is the oxidation at the C-8 position by the cytochrome P450 monooxygenase PaP450-2 to yield fusicocca-2,10(14)-diene-8-beta-ol. The cytochrome P450 monooxygenase PaP450-1 then catalyzes the hydroxylation at the C-16 position to produce fusicocca-2,10(14)-diene-8-beta,16-diol. The dioxygenase fc-dox then catalyzes the 16-oxydation of fusicocca-2,10(14)-diene-8-beta,16-diol to yield an aldehyde (8-beta-hydroxyfusicocca-1,10(14)-dien-16-al). The short-chain dehydrogenase/reductase fc-sdr catalyzes the reduction of the aldehyde to yield fusicocca-1,10(14)-diene-8-beta,16-diol. The next step is the hydroxylation at C-9 performed by the cytochrome P450 monooxygenase PaP450-3 that leads to fusicoccin H aglycon which is glycosylated to fusicoccin H by the O-glycosyltransferase PAGT. Hydroxylation at C-12 by the cytochrome P450 monooxygenase PaP450-4 leads then to the production of fusicoccin Q and is followed by methylation by the O-methyltransferase PAMT to yield fusicoccin P. Fusicoccin P is further converted to fusicoccin J via prenylation by the O-glucose prenyltransferase PaPT. Cytochrome P450 monooxygenase PaP450-5 then performs hydroxylation at C-19 to yield dideacetyl-fusicoccin A which is acetylated to 3'-O-deacetyl-fusicoccin A by the O-acetyltransferase PaAT-2. Finally, a another acetylation by the O-acetyltransferase PaAT-1 yields fusicoccin A. The sequence is that of Fusicoccadiene synthase from Phomopsis amygdali (Fusicoccum amygdali).